A 147-amino-acid chain; its full sequence is DNA-directed RNA polymerase subunit 6 homolog (147 aa).

This sequence belongs to the archaeal RpoK/eukaryotic RPB6 RNA polymerase subunit family. As to quaternary structure, part of the viral DNA-directed RNA polymerase that consists of 8 polII-like subunits (RPB1, RPB2, RPB3, RPB5, RPB6, RPB7, RPB9, RPB10), a capping enzyme and a termination factor.

It localises to the host cytoplasm. The protein resides in the virion. In terms of biological role, component of the DNA-directed RNA polymerase (RNAP) that catalyzes the transcription in the cytoplasm of viral DNA into RNA using the four ribonucleoside triphosphates as substrates. This Ornithodoros (relapsing fever ticks) protein is DNA-directed RNA polymerase subunit 6 homolog.